We begin with the raw amino-acid sequence, 140 residues long: Large ribosomal subunit protein bL34m (140 aa).

The protein belongs to the bacterial ribosomal protein bL34 family. In terms of assembly, component of the mitochondrial large ribosomal subunit (mt-LSU). Mature N.crassa 74S mitochondrial ribosomes consist of a small (37S) and a large (54S) subunit. The 37S small subunit contains a 16S ribosomal RNA (16S mt-rRNA) and 32 different proteins. The 54S large subunit contains a 23S rRNA (23S mt-rRNA) and 42 different proteins.

Its subcellular location is the mitochondrion. In terms of biological role, component of the mitochondrial ribosome (mitoribosome), a dedicated translation machinery responsible for the synthesis of mitochondrial genome-encoded proteins, including at least some of the essential transmembrane subunits of the mitochondrial respiratory chain. The mitoribosomes are attached to the mitochondrial inner membrane and translation products are cotranslationally integrated into the membrane. This Neurospora crassa (strain ATCC 24698 / 74-OR23-1A / CBS 708.71 / DSM 1257 / FGSC 987) protein is Large ribosomal subunit protein bL34m (mrpl34).